A 91-amino-acid chain; its full sequence is MSHTHRDQKKLLARVRRIKGQAEALERALESGGECSAVLQQIAAVRGAVNGLMAQVLEGHVREHLAAADATPQQREQDIEQLMTVLRSYMK.

Belongs to the FrmR/RcnR family.

The protein resides in the cytoplasm. This is an uncharacterized protein from Serratia marcescens.